The primary structure comprises 400 residues: Cytoplasmic tRNA 2-thiolation protein 2 (400 aa).

This sequence belongs to the CTU2/NCS2 family.

It is found in the cytoplasm. It participates in tRNA modification; 5-methoxycarbonylmethyl-2-thiouridine-tRNA biosynthesis. In terms of biological role, plays a central role in 2-thiolation of mcm(5)S(2)U at tRNA wobble positions of tRNA(Lys), tRNA(Glu) and tRNA(Gln). May act by forming a heterodimer with NCS6/CTU1 that ligates sulfur from thiocarboxylated URM1 onto the uridine of tRNAs at wobble position. This is Cytoplasmic tRNA 2-thiolation protein 2 from Drosophila virilis (Fruit fly).